The following is a 396-amino-acid chain: Elongation factor Tu 2 (396 aa).

The tr-type G domain occupies 10–206 (KPHCNVGTIG…AVDDYIPQPE (197 aa)). Residues 19–26 (GHVDHGKT) form a G1 region. 19 to 26 (GHVDHGKT) lines the GTP pocket. T26 is a binding site for Mg(2+). Residues 60–64 (GITIS) form a G2 region. Residues 81-84 (DCPG) are G3. GTP-binding positions include 81–85 (DCPGH) and 136–139 (NKCD). The G4 stretch occupies residues 136 to 139 (NKCD). Positions 174 to 176 (SAL) are G5.

It belongs to the TRAFAC class translation factor GTPase superfamily. Classic translation factor GTPase family. EF-Tu/EF-1A subfamily. As to quaternary structure, monomer.

Its subcellular location is the cytoplasm. The enzyme catalyses GTP + H2O = GDP + phosphate + H(+). Functionally, GTP hydrolase that promotes the GTP-dependent binding of aminoacyl-tRNA to the A-site of ribosomes during protein biosynthesis. The sequence is that of Elongation factor Tu 2 from Rhodospirillum rubrum (strain ATCC 11170 / ATH 1.1.1 / DSM 467 / LMG 4362 / NCIMB 8255 / S1).